We begin with the raw amino-acid sequence, 186 residues long: Ribosome maturation factor RimP (186 aa).

It belongs to the RimP family.

The protein resides in the cytoplasm. Its function is as follows. Required for maturation of 30S ribosomal subunits. The sequence is that of Ribosome maturation factor RimP from Novosphingobium aromaticivorans (strain ATCC 700278 / DSM 12444 / CCUG 56034 / CIP 105152 / NBRC 16084 / F199).